A 122-amino-acid polypeptide reads, in one-letter code: Large ribosomal subunit protein uL14 (122 aa).

The protein belongs to the universal ribosomal protein uL14 family. In terms of assembly, part of the 50S ribosomal subunit. Forms a cluster with proteins L3 and L19. In the 70S ribosome, L14 and L19 interact and together make contacts with the 16S rRNA in bridges B5 and B8.

In terms of biological role, binds to 23S rRNA. Forms part of two intersubunit bridges in the 70S ribosome. The protein is Large ribosomal subunit protein uL14 of Thermodesulfovibrio yellowstonii (strain ATCC 51303 / DSM 11347 / YP87).